Reading from the N-terminus, the 149-residue chain is Large ribosomal subunit protein bL9 (149 aa).

This sequence belongs to the bacterial ribosomal protein bL9 family.

Its function is as follows. Binds to the 23S rRNA. The protein is Large ribosomal subunit protein bL9 of Haemophilus influenzae (strain PittGG).